A 99-amino-acid chain; its full sequence is MALTPADVSRIANLARLELSTAEQSDLLVQLNGFFGIVERMRAVDTTGVAPLYTPLSAVQDVSLRLRDDAVTETDQREANQKSAPAVEGGLFLVPRVIE.

It belongs to the GatC family. As to quaternary structure, heterotrimer of A, B and C subunits.

It catalyses the reaction L-glutamyl-tRNA(Gln) + L-glutamine + ATP + H2O = L-glutaminyl-tRNA(Gln) + L-glutamate + ADP + phosphate + H(+). The enzyme catalyses L-aspartyl-tRNA(Asn) + L-glutamine + ATP + H2O = L-asparaginyl-tRNA(Asn) + L-glutamate + ADP + phosphate + 2 H(+). In terms of biological role, allows the formation of correctly charged Asn-tRNA(Asn) or Gln-tRNA(Gln) through the transamidation of misacylated Asp-tRNA(Asn) or Glu-tRNA(Gln) in organisms which lack either or both of asparaginyl-tRNA or glutaminyl-tRNA synthetases. The reaction takes place in the presence of glutamine and ATP through an activated phospho-Asp-tRNA(Asn) or phospho-Glu-tRNA(Gln). This is Aspartyl/glutamyl-tRNA(Asn/Gln) amidotransferase subunit C from Leptothrix cholodnii (strain ATCC 51168 / LMG 8142 / SP-6) (Leptothrix discophora (strain SP-6)).